A 397-amino-acid polypeptide reads, in one-letter code: Tryptophan synthase beta chain (397 aa).

K91 is modified (N6-(pyridoxal phosphate)lysine).

This sequence belongs to the TrpB family. As to quaternary structure, tetramer of two alpha and two beta chains. Pyridoxal 5'-phosphate is required as a cofactor.

It catalyses the reaction (1S,2R)-1-C-(indol-3-yl)glycerol 3-phosphate + L-serine = D-glyceraldehyde 3-phosphate + L-tryptophan + H2O. It functions in the pathway amino-acid biosynthesis; L-tryptophan biosynthesis; L-tryptophan from chorismate: step 5/5. Its function is as follows. The beta subunit is responsible for the synthesis of L-tryptophan from indole and L-serine. This is Tryptophan synthase beta chain from Bacillus cereus (strain G9842).